We begin with the raw amino-acid sequence, 585 residues long: Mitochondrial translation ATP-dependent RNA helicase mrh5 (585 aa).

The Q motif motif lies at 87-117 (PKFHELPLNQNILDGLSTNFAEYKNSTPLQQ). In terms of domain architecture, Helicase ATP-binding spans 121-351 (NALMKSGVSF…SRYITDQLGI (231 aa)). 134-141 (GWNGSGKS) serves as a coordination point for ATP. A DEAD box motif is present at residues 261 to 264 (DESD). One can recognise a Helicase C-terminal domain in the interval 390–584 (NLPYEFVRFN…PKSYEFDDEH (195 aa)).

This sequence belongs to the DEAD box helicase family. As to quaternary structure, component of the MRH5C complex, composed of mrh5, ppr4, mtf2, and sls1. Proteins mtf2 and sls1 form a subcomplex that serves as a scaffold to bring mrh5 and ppr4 together. The MRH5C complex associates with the small subunit of the mitochondrial ribosome.

The protein localises to the mitochondrion. It carries out the reaction ATP + H2O = ADP + phosphate + H(+). Functionally, translation activation factor that as part of the MRH5C complex specifically recruits cox1 mRNA to the mitochondrial ribosome for translation initiation. In Schizosaccharomyces pombe (strain 972 / ATCC 24843) (Fission yeast), this protein is Mitochondrial translation ATP-dependent RNA helicase mrh5.